The following is a 616-amino-acid chain: GPI mannosyltransferase 3 (616 aa).

Over Met1–Gln16 the chain is Cytoplasmic. Residues Ile17–Gln37 form a helical membrane-spanning segment. Topologically, residues Ala38–Ser86 are lumenal. The helical transmembrane segment at Ile87–Leu107 threads the bilayer. Topologically, residues Leu108–Gly136 are cytoplasmic. Residues Val137 to Val157 traverse the membrane as a helical segment. Residues Arg158–Lys188 lie on the Lumenal side of the membrane. The helical transmembrane segment at Phe189 to Ile209 threads the bilayer. Residues Asn210–Ser240 are Cytoplasmic-facing. The helical transmembrane segment at Leu241–Pro261 threads the bilayer. At Ser262–Leu278 the chain is on the lumenal side. The helical transmembrane segment at Phe279–Ile299 threads the bilayer. The Cytoplasmic portion of the chain corresponds to Asp300–Gln338. Residues Ser339–Leu359 traverse the membrane as a helical segment. Topologically, residues Ser360 to Lys392 are lumenal. A helical membrane pass occupies residues Glu393 to Leu413. The Cytoplasmic segment spans residues Arg414–Leu423. The helical transmembrane segment at Ser424–Leu444 threads the bilayer. The Lumenal portion of the chain corresponds to Asp445 to Ile616.

It belongs to the glycosyltransferase 22 family. PIGB subfamily.

It localises to the endoplasmic reticulum membrane. It participates in glycolipid biosynthesis; glycosylphosphatidylinositol-anchor biosynthesis. Mannosyltransferase involved in glycosylphosphatidylinositol-anchor biosynthesis. Transfers the third mannose to Man2-GlcN-acyl-PI during GPI precursor assembly. This chain is GPI mannosyltransferase 3 (GPI10), found in Saccharomyces cerevisiae (strain ATCC 204508 / S288c) (Baker's yeast).